A 345-amino-acid polypeptide reads, in one-letter code: Phosphoribosylformylglycinamidine cyclo-ligase (345 aa).

The protein belongs to the AIR synthase family.

Its subcellular location is the cytoplasm. It carries out the reaction 2-formamido-N(1)-(5-O-phospho-beta-D-ribosyl)acetamidine + ATP = 5-amino-1-(5-phospho-beta-D-ribosyl)imidazole + ADP + phosphate + H(+). It participates in purine metabolism; IMP biosynthesis via de novo pathway; 5-amino-1-(5-phospho-D-ribosyl)imidazole from N(2)-formyl-N(1)-(5-phospho-D-ribosyl)glycinamide: step 2/2. The sequence is that of Phosphoribosylformylglycinamidine cyclo-ligase from Shewanella denitrificans (strain OS217 / ATCC BAA-1090 / DSM 15013).